Consider the following 297-residue polypeptide: MEQLRAELSHLLGEKLSRIECVNEKADTALWALYDSQGNPMPLMARSFSTPGKARQLAWKTTMLARSGTVRMPTIYGVMTHEEHPGPDVLLLERMRGVSVEAPARTPERWEQLKDQIVEALLAWHRQDSRGCVGAVDNTQENFWPSWYRQHVEVLWTTLNQFNNTGLTMQDKRILFRTRECLPALFEGFNDNCVLIHGNFCLRSMLKDSRSDQLLAMVGPGLMLWAPREYELFRLMDNSLAEDLLWSYLQRAPVAESFIWRRWLYVLWDEVAQLVNTGRFSRRNFDLASKSLLPWLA.

This is an uncharacterized protein from Escherichia coli O157:H7.